The following is a 265-amino-acid chain: HUWE1-associated protein modifying stress responses (265 aa).

Disordered stretches follow at residues 1 to 22 (MEEK…HWFS), 140 to 173 (GKAP…SVET), and 194 to 219 (ISMR…RRNG). Residues 147–172 (SSRAPPRLAMVSPSRSTPSETSSSVE) show a composition bias toward low complexity.

The protein belongs to the HAPSTR1 family. Oligomer.

Its subcellular location is the nucleus. The protein resides in the cytoplasm. In terms of biological role, acts as a central player within a network of stress response pathways promoting cellular adaptability. Functions as a negative regulator of TP53/P53 in the cellular response to telomere erosion and probably also DNA damage. This Danio rerio (Zebrafish) protein is HUWE1-associated protein modifying stress responses.